The following is a 269-amino-acid chain: MAPLRILISNDDGVFADGIRTLAAAAAARGHEVTVVCPDQERSATGHGLTLQSPIRAERADELFAPGVTAWACSGTPADCMKLALFELVKHKPDLVLSGINHGPNLGTDVFCSGTVAAAMEGTLEGIRSLAVSSACFQWRQFQAAADLAMDVSEQAIHGNWPENMLLNLNIPPCAKEVMGPLRWTRLSIRRYDEQFSSRKDPRGRAYYWLAGEVVNDLESAGEGPKDWPSDVAQIHKNCPSLTPIQPDLFWRGPLGDLPQLKLNDQSVH.

Positions 11, 12, 43, and 101 each coordinate a divalent metal cation.

The protein belongs to the SurE nucleotidase family. A divalent metal cation serves as cofactor.

It is found in the cytoplasm. It catalyses the reaction a ribonucleoside 5'-phosphate + H2O = a ribonucleoside + phosphate. Functionally, nucleotidase that shows phosphatase activity on nucleoside 5'-monophosphates. In Synechococcus sp. (strain CC9902), this protein is 5'-nucleotidase SurE.